The following is a 765-amino-acid chain: MAADPTELRLGSLPVFTRDDFEGDWRLVASGGFSQVFQARHRRWRTEYAIKCAPCLPPDAASSDVNYLIEEAAKMKKIKFQHIVSIYGVCKQPLGIVMEFMANGSLEKVLSTHSLCWKLRFRIIHETSLAMNFLHSIKPPLLHLDLKPGNILLDSNMHVKISDFGLSKWMEQSTRMQYIERSALRGMLSYIPPEMFLESNKAPGPKYDVYSFAIVIWELLTQKKPYSGFNMMMIIIRVAAGMRPSLQPVSDQWPSEAQQMVDLMKRCWDQDPKKRPCFLDITIETDILLSLLQSRVAVPESKALARKVSCKLSLRQPGEVNEDISQELMDSDSGNYLKRALQLSDRKNLVPRDEELCIYENKVTPLHFLVAQGSVEQVRLLLAHEVDVDCQTASGYTPLLIAAQDQQPDLCALLLAHGADANRVDEDGWAPLHFAAQNGDDGTARLLLDHGACVDAQEREGWTPLHLAAQNNFENVARLLVSRQADPNLHEAEGKTPLHVAAYFGHVSLVKLLTSQGAELDAQQRNLRTPLHLAVERGKVRAIQHLLKSGAVPDALDQSGYGPLHTAAARGKYLICKMLLRYGASLELPTHQGWTPLHLAAYKGHLEIIHLLAESHANMGALGAVNWTPLHLAARHGEEAVVSALLQCGADPNAAEQSGWTPLHLAVQRSTFLSVINLLEHHANVHARNKVGWTPAHLAALKGNTAILKVLVEAGAQLDVQDGVSCTPLQLALRSRKQGIMSFLEGKEPSVATLGGSKPGAEMEI.

A Protein kinase domain is found at 22–289 (EGDWRLVASG…DITIETDILL (268 aa)). ATP is bound by residues 28–36 (VASGGFSQV) and lysine 51. The active-site Proton acceptor is the aspartate 145. ANK repeat units follow at residues 361 to 390 (NKVTPLHFLVAQGSVEQVRLLLAHEVDVDC), 394 to 423 (SGYTPLLIAAQDQQPDLCALLLAHGADANR), 427 to 456 (DGWAPLHFAAQNGDDGTARLLLDHGACVDA), 460 to 489 (EGWTPLHLAAQNNFENVARLLVSRQADPNL), 493 to 522 (EGKTPLHVAAYFGHVSLVKLLTSQGAELDA), 526 to 555 (NLRTPLHLAVERGKVRAIQHLLKSGAVPDA), 559 to 588 (SGYGPLHTAAARGKYLICKMLLRYGASLEL), 592 to 621 (QGWTPLHLAAYKGHLEIIHLLAESHANMGA), 625 to 654 (VNWTPLHLAARHGEEAVVSALLQCGADPNA), 658 to 687 (SGWTPLHLAVQRSTFLSVINLLEHHANVHA), 691 to 720 (VGWTPAHLAALKGNTAILKVLVEAGAQLDV), and 724 to 753 (VSCTPLQLALRSRKQGIMSFLEGKEPSVAT).

It belongs to the protein kinase superfamily. TKL Ser/Thr protein kinase family. As to expression, highly expressed in brain and weakly expressed in placenta and spinal cord.

The catalysed reaction is L-seryl-[protein] + ATP = O-phospho-L-seryl-[protein] + ADP + H(+). It catalyses the reaction L-threonyl-[protein] + ATP = O-phospho-L-threonyl-[protein] + ADP + H(+). This is Ankyrin repeat and protein kinase domain-containing protein 1 (ANKK1) from Homo sapiens (Human).